The primary structure comprises 159 residues: Ribosomal RNA large subunit methyltransferase H (159 aa).

Residues G108 and F127–F132 each bind S-adenosyl-L-methionine.

It belongs to the RNA methyltransferase RlmH family. As to quaternary structure, homodimer.

Its subcellular location is the cytoplasm. The enzyme catalyses pseudouridine(1915) in 23S rRNA + S-adenosyl-L-methionine = N(3)-methylpseudouridine(1915) in 23S rRNA + S-adenosyl-L-homocysteine + H(+). In terms of biological role, specifically methylates the pseudouridine at position 1915 (m3Psi1915) in 23S rRNA. The sequence is that of Ribosomal RNA large subunit methyltransferase H from Clostridium beijerinckii (strain ATCC 51743 / NCIMB 8052) (Clostridium acetobutylicum).